Reading from the N-terminus, the 255-residue chain is 3-deoxy-manno-octulosonate cytidylyltransferase (255 aa).

This sequence belongs to the KdsB family.

It is found in the cytoplasm. It carries out the reaction 3-deoxy-alpha-D-manno-oct-2-ulosonate + CTP = CMP-3-deoxy-beta-D-manno-octulosonate + diphosphate. It participates in nucleotide-sugar biosynthesis; CMP-3-deoxy-D-manno-octulosonate biosynthesis; CMP-3-deoxy-D-manno-octulosonate from 3-deoxy-D-manno-octulosonate and CTP: step 1/1. It functions in the pathway bacterial outer membrane biogenesis; lipopolysaccharide biosynthesis. Functionally, activates KDO (a required 8-carbon sugar) for incorporation into bacterial lipopolysaccharide in Gram-negative bacteria. This is 3-deoxy-manno-octulosonate cytidylyltransferase from Polaromonas sp. (strain JS666 / ATCC BAA-500).